The primary structure comprises 251 residues: Vacuolar protein sorting-associated protein 37D (251 aa).

The region spanning 93 to 182 (AENCADKLQR…RRRERSAQPA (90 aa)) is the VPS37 C-terminal domain. Positions 174–251 (RRERSAQPAP…RPSQPEPPHR (78 aa)) are disordered. Residues 221 to 251 (PVPPLKGSPGCPLGPAPLLSPRPSQPEPPHR) are compositionally biased toward pro residues.

It belongs to the VPS37 family. Component of the ESCRT-I complex (endosomal sorting complex required for transport I) which consists of TSG101, VPS28, a VPS37 protein (VPS37A to -D) and MVB12A or MVB12B in a 1:1:1:1 stoichiometry. Interacts with TSG101 and MVB12A. Component of the ESCRT-I complex (endosomal sorting complex required for transport I) which consists of TSG101, VPS28, a VPS37 protein (VPS37A to -D) and UBAP1 in a 1:1:1:1 stoichiometry.

The protein resides in the late endosome membrane. Its function is as follows. Component of the ESCRT-I complex, a regulator of vesicular trafficking process. Required for the sorting of endocytic ubiquitinated cargos into multivesicular bodies. May be involved in cell growth and differentiation. This Homo sapiens (Human) protein is Vacuolar protein sorting-associated protein 37D.